The primary structure comprises 393 residues: S-adenosylmethionine synthase (393 aa).

H16 contributes to the ATP binding site. D18 serves as a coordination point for Mg(2+). Residue E44 coordinates K(+). The L-methionine site is built by E57 and Q100. Positions 100-110 (QSNDIAQGVDH) are flexible loop. Residues 167 to 169 (DAK), 238 to 239 (RF), D247, 253 to 254 (RK), A270, and K274 contribute to the ATP site. Residue D247 participates in L-methionine binding. Residue K278 participates in L-methionine binding.

It belongs to the AdoMet synthase family. As to quaternary structure, homotetramer; dimer of dimers. Requires Mg(2+) as cofactor. K(+) serves as cofactor.

The protein resides in the cytoplasm. It catalyses the reaction L-methionine + ATP + H2O = S-adenosyl-L-methionine + phosphate + diphosphate. It participates in amino-acid biosynthesis; S-adenosyl-L-methionine biosynthesis; S-adenosyl-L-methionine from L-methionine: step 1/1. Catalyzes the formation of S-adenosylmethionine (AdoMet) from methionine and ATP. The overall synthetic reaction is composed of two sequential steps, AdoMet formation and the subsequent tripolyphosphate hydrolysis which occurs prior to release of AdoMet from the enzyme. The polypeptide is S-adenosylmethionine synthase (Acidovorax ebreus (strain TPSY) (Diaphorobacter sp. (strain TPSY))).